The sequence spans 283 residues: ATP phosphoribosyltransferase (283 aa).

This sequence belongs to the ATP phosphoribosyltransferase family. Long subfamily. Mg(2+) serves as cofactor.

The protein resides in the cytoplasm. The catalysed reaction is 1-(5-phospho-beta-D-ribosyl)-ATP + diphosphate = 5-phospho-alpha-D-ribose 1-diphosphate + ATP. It functions in the pathway amino-acid biosynthesis; L-histidine biosynthesis; L-histidine from 5-phospho-alpha-D-ribose 1-diphosphate: step 1/9. Its activity is regulated as follows. Feedback inhibited by histidine. Functionally, catalyzes the condensation of ATP and 5-phosphoribose 1-diphosphate to form N'-(5'-phosphoribosyl)-ATP (PR-ATP). Has a crucial role in the pathway because the rate of histidine biosynthesis seems to be controlled primarily by regulation of HisG enzymatic activity. The sequence is that of ATP phosphoribosyltransferase from Parabacteroides distasonis (strain ATCC 8503 / DSM 20701 / CIP 104284 / JCM 5825 / NCTC 11152).